Here is a 116-residue protein sequence, read N- to C-terminus: Small ribosomal subunit protein uS13m (116 aa).

Residues 92–116 (HQDGSPLRGQRTHTNARTARKQIRK) form a disordered region.

This sequence belongs to the universal ribosomal protein uS13 family. Part of the small ribosomal subunit.

The protein resides in the mitochondrion. Functionally, located at the top of the head of the small subunit, it contacts several helices of the 18S rRNA. The protein is Small ribosomal subunit protein uS13m (RPS13) of Triticum aestivum (Wheat).